Here is a 518-residue protein sequence, read N- to C-terminus: Triacylglycerol lipase OBL1 (518 aa).

A helical transmembrane segment spans residues G93–L113. The GXSXG motif lies at G337–G341. The active-site Nucleophile is S339. Active-site charge relay system residues include D403 and H496.

Belongs to the AB hydrolase superfamily. Lipase family. In terms of tissue distribution, expressed in pollen grains, pollen tubes, developing embryos, developing seeds and germinating seeds.

It is found in the lipid droplet. The protein resides in the membrane. It catalyses the reaction 1,2-di-(9Z-octadecenoyl)-glycerol + (9Z)-octadecenoate + H(+) = 1,2,3-tri-(9Z-octadecenoyl)-glycerol + H2O. The catalysed reaction is 1-(9Z-octadecenoyl)-glycerol + H2O = glycerol + (9Z)-octadecenoate + H(+). Acid lipase that can hydrolyze a range of triacylglycerols without a clear preference for acyl-chains. Can also cleave 1,2-diacylglycerol, 1,3-diacylglycerol and 1-monoacylglycerol, but not phosphatidylcholine, phosphatidylethanolamine, or sterol esters. Required for pollen tube growth. Triacylglycerol hydrolysis by OBL1 may provide acyl groups for the synthesis of membrane lipids in growing pollen tubes. This is Triacylglycerol lipase OBL1 from Arabidopsis thaliana (Mouse-ear cress).